Consider the following 1294-residue polypeptide: uncharacterized protein (1294 aa).

Residues 1-375 (MSQQENGDVA…RNFKLNFSDY (375 aa)) are Extracellular-facing. Residues 28–287 (LHVRDLSIVA…FESIGYHVPQ (260 aa)) enclose the ABC transporter 1 domain. Residue Asn41 is glycosylated (N-linked (GlcNAc...) asparagine). 62–69 (GGSGSGKT) contacts ATP. N-linked (GlcNAc...) asparagine glycans are attached at residues Asn86, Asn101, Asn151, Asn341, Asn349, and Asn371. A helical transmembrane segment spans residues 376–396 (VTLISTFAEPLIIGTVCGWIY). At 397–495 (YKPDKSSIGG…EADARKFFYQ (99 aa)) the chain is on the cytoplasmic side. Residues 496–516 (FAVVFLCQLSCSGLSMLSVAV) traverse the membrane as a helical segment. At 517 to 530 (SRDFSKASLVGNMT) the chain is on the extracellular side. A glycan (N-linked (GlcNAc...) asparagine) is linked at Asn528. The chain crosses the membrane as a helical span at residues 531 to 551 (FTVLSMGCGFFVNAKVMPVYV). Topologically, residues 552–604 (RWIKYIAFTWYSFGTLMSSTFTNSYCTTDNLDECLGNQILEVYGFPRNWITVP) are cytoplasmic. The helical transmembrane segment at 605-625 (AVVLLCWSVGYFVVGAIILYL) threads the bilayer. At 626–1038 (HKIDITLQNE…TTTRRSFDSL (413 aa)) the chain is on the extracellular side. Positions 679–941 (IKLEDIDLRV…FTELGYNCPS (263 aa)) constitute an ABC transporter 2 domain. 727 to 734 (GPSGSGKS) serves as a coordination point for ATP. N-linked (GlcNAc...) asparagine glycosylation is present at Asn983. Residues 1039–1059 (MARIAQIPGLGVIFALFFAPV) traverse the membrane as a helical segment. The Cytoplasmic portion of the chain corresponds to 1060-1120 (KHNYTSISNR…PFFLAYMTLE (61 aa)). Residues 1121–1141 (LPLSALASVLYAVFTVLACGL) traverse the membrane as a helical segment. Over 1142 to 1266 (PRTAGNFFAT…YGLVRNTQKY (125 aa)) the chain is Extracellular. A helical membrane pass occupies residues 1267–1287 (LGIIVCVAIIYRLIAFFILKA). The Cytoplasmic segment spans residues 1288–1294 (KLEWIKW).

It belongs to the ABC transporter superfamily. ABCG family. PDR (TC 3.A.1.205) subfamily.

Its subcellular location is the membrane. This is an uncharacterized protein from Saccharomyces cerevisiae (strain ATCC 204508 / S288c) (Baker's yeast).